Here is a 122-residue protein sequence, read N- to C-terminus: MGKARGVNNGVNESSLGYLFGSGQPSSAAAATMGTTTTTTTTTTTDGTGGRPITTTTTTVTDNKKTSAGVRGSPNNYFRSEGQNCGNFLTDRPSTKVHAAPGGGSSLDYLFGGPSPAGSGNK.

Disordered regions lie at residues 1–78 (MGKA…NNYF) and 96–122 (KVHA…SGNK). The segment covering 32-61 (TMGTTTTTTTTTTTDGTGGRPITTTTTTVT) has biased composition (low complexity). At Ser73 the chain carries Phosphoserine.

This sequence belongs to the SPIRAL1 family. Ubiquitous. Preferentially expressed in above-ground organs.

Functionally, acts redundantly with SPR1 in maintaining the cortical microtubules organization essential for anisotropic cell growth. The polypeptide is Protein SPIRAL1-like 3 (SP1L3) (Arabidopsis thaliana (Mouse-ear cress)).